The primary structure comprises 366 residues: D-alanine--D-alanine ligase A (366 aa).

The region spanning 145–348 (KRLLRDAGLK…YRELITALIE (204 aa)) is the ATP-grasp domain. 175–230 (VEQLGLPLFVKPANQGSSVGVSKVKREADLRAALDEAFRYDHKVLVEQAVIGREIE) serves as a coordination point for ATP. 3 residues coordinate Mg(2+): Asp302, Glu315, and Asn317.

This sequence belongs to the D-alanine--D-alanine ligase family. Requires Mg(2+) as cofactor. It depends on Mn(2+) as a cofactor.

The protein resides in the cytoplasm. The enzyme catalyses 2 D-alanine + ATP = D-alanyl-D-alanine + ADP + phosphate + H(+). The protein operates within cell wall biogenesis; peptidoglycan biosynthesis. Cell wall formation. This chain is D-alanine--D-alanine ligase A, found in Chromobacterium violaceum (strain ATCC 12472 / DSM 30191 / JCM 1249 / CCUG 213 / NBRC 12614 / NCIMB 9131 / NCTC 9757 / MK).